The following is a 167-amino-acid chain: Probable chorismate pyruvate-lyase (167 aa).

Positions 71, 110, and 150 each coordinate substrate.

Belongs to the UbiC family.

It localises to the cytoplasm. It carries out the reaction chorismate = 4-hydroxybenzoate + pyruvate. The protein operates within cofactor biosynthesis; ubiquinone biosynthesis. Functionally, removes the pyruvyl group from chorismate, with concomitant aromatization of the ring, to provide 4-hydroxybenzoate (4HB) for the ubiquinone pathway. This chain is Probable chorismate pyruvate-lyase, found in Acinetobacter baylyi (strain ATCC 33305 / BD413 / ADP1).